The primary structure comprises 162 residues: ATP synthase subunit delta, mitochondrial (162 aa).

The transit peptide at 1–24 directs the protein to the mitochondrion; it reads MFSVARTAIRGAARPAVRIARRGY.

F-type ATP synthases have 2 components, the catalytic core F(1) and the membrane-embedded component F(0), linked together by a central stalk and a peripheral stalk. The central stalk, also called rotor shaft, is often seen as part of F(1). The peripheral stalk is seen as part of F(0). F(0) contains the membrane channel next to the rotor. F-type ATP synthases form dimers but each monomer functions independently in ATP generation. The dimer consists of 17 different polypeptides: ATP1 (subunit alpha, 3 molecules per monomer, part of F(1)), ATP2 (subunit beta, 3 copies per monomer, part of F(1)), ATP3 (subunit gamma, part of the central stalk), ATP4 (subunit b, part of the peripheral stalk), ATP5/OSCP (subunit 5/OSCP, part of the peripheral stalk), ATP6 (subunit a, part of the peripheral stalk), ATP7 (subunit d, part of the peripheral stalk), ATP8 (subunit 8, part of the peripheral stalk), OLI1 (subunit c, part of the rotor, 10 molecules per monomer), ATP14 (subunit h, part of the peripheral stalk), ATP15 (subunit epsilon, part of the central stalk), ATP16 (subunit delta, part of the central stalk), ATP17 (subunit f, part of the peripheral stalk), ATP18 (subunit i/j, part of the peripheral stalk), ATP19 (subunit k, dimer-specific, at interface between monomers), ATP20 (subunit g, at interface between monomers), TIM11 (subunit e, at interface between monomers).

The protein localises to the mitochondrion inner membrane. Functionally, mitochondrial membrane ATP synthase (F(1)F(0) ATP synthase or Complex V) produces ATP from ADP in the presence of a proton gradient across the membrane which is generated by electron transport complexes of the respiratory chain. F-type ATP synthases consist of two structural domains, F(1) - containing the extramembraneous catalytic core, and F(0) - containing the membrane proton channel, linked together by a central stalk and a peripheral stalk. During catalysis, ATP synthesis in the catalytic domain of F(1) is coupled via a rotary mechanism of the central stalk subunits to proton translocation. Part of the complex F(1) domain and the central stalk which is part of the complex rotary element. Rotation of the central stalk against the surrounding alpha/ATP1(3)beta/ATP2(3) subunits leads to hydrolysis of ATP in three separate catalytic sites on the beta/ATP2 subunits. This is ATP synthase subunit delta, mitochondrial from Yarrowia lipolytica (strain CLIB 122 / E 150) (Yeast).